The primary structure comprises 456 residues: Phospholipase A1 member A (456 aa).

The signal sequence occupies residues 1–25 (MRPGLWETCFWLWGPLLWLSIGSSG). The Nucleophile role is filled by S166. The Charge relay system role is filled by D190. The cysteines at positions 245 and 258 are disulfide-linked. H260 (charge relay system) is an active-site residue. 2 disulfide bridges follow: C282–C293 and C296–C304. N365 is a glycosylation site (N-linked (GlcNAc...) asparagine).

The protein belongs to the AB hydrolase superfamily. Lipase family.

It is found in the secreted. It catalyses the reaction a 1,2-diacyl-sn-glycero-3-phospho-L-serine + H2O = a 2-acyl-sn-glycero-3-phospho-L-serine + a fatty acid + H(+). The catalysed reaction is 1,2-di-(9Z)-octadecenoyl-sn-glycero-3-phospho-L-serine + H2O = 2-(9Z-octadecenoyl)-sn-glycero-3-phospho-L-serine + (9Z)-octadecenoate + H(+). It carries out the reaction 1-hexadecanoyl-2-(5Z,8Z,11Z,14Z-eicosatetraenoyl)-sn-glycero-3-phospho-L-serine + H2O = 2-(5Z,8Z,11Z,14Z)-eicosatetraenoyl-sn-glycero-3-phospho-L-serine + hexadecanoate + H(+). The enzyme catalyses a 1-acyl-sn-glycero-3-phospho-L-serine + H2O = sn-glycero-3-phospho-L-serine + a fatty acid + H(+). It catalyses the reaction 1-(9Z-octadecenoyl)-sn-glycero-3-phospho-L-serine + H2O = sn-glycero-3-phospho-L-serine + (9Z)-octadecenoate + H(+). In terms of biological role, hydrolyzes the ester bond of the acyl group attached at the sn-1 position of phosphatidylserines (phospholipase A1 activity) and 1-acyl-2-lysophosphatidylserines (lysophospholipase activity) in the pathway of phosphatidylserines acyl chain remodeling. Cleaves phosphatidylserines exposed on the outer leaflet of the plasma membrane of apoptotic cells producing 2-acyl-1-lysophosphatidylserines, which in turn enhance mast cell activation and histamine production. Has no activity toward other glycerophospholipids including phosphatidylcholines, phosphatidylethanolamines, phosphatidic acids or phosphatidylinositols, or glycerolipids such as triolein. This Mus musculus (Mouse) protein is Phospholipase A1 member A.